We begin with the raw amino-acid sequence, 498 residues long: uncharacterized protein (498 aa).

Disordered stretches follow at residues 1–48, 99–134, and 190–209; these read MSND…ARPK, NDLHPLDNDSTRTSKTLKNSSEVLTASKLTDEGNSK, and NSENSNVNNGSSLNGNTSSN. Over residues 35 to 44 the composition is skewed to polar residues; the sequence is ELSTPKQVNQ. Over residues 99-110 the composition is skewed to basic and acidic residues; it reads NDLHPLDNDSTR. A compositionally biased stretch (polar residues) spans 111–126; sequence TSKTLKNSSEVLTASK.

This is an uncharacterized protein from Schizosaccharomyces pombe (strain 972 / ATCC 24843) (Fission yeast).